Here is a 626-residue protein sequence, read N- to C-terminus: MELETIEYNKSFNICENGDSKGVQLTFKNISYKVENKNYNKNKKEKNKNKIDPEFVNLDNKTENSNEKEITILYNVGGVIEKGELVALMGPSGSGKSTLLDILAQRKSTGKITGQLLVNGKEIGEAYKKYCSYVTQEDVLLQTYTVFETLKFYADLKLPGVSEIEKIKRVEKVIEDVGLTLKRDSRVGGVLAGGVAVTGLSGGEKRRVSIGCGLITNPSLIFLDEPTSGLDSVAALQIMKTLLNLTLKGVTVICSIHQPRPEIFQLINKVMVIIKGKMIYSGSNILEYFESLGYPCPNNTNPADFCLDSAVEIGEGERYTEICNQWENKWENQLTNEIEYPSLNVDIPKTTSWVYQYWILLNREWRGFIRNKGNALSRVITAIVIGALFGSCFAGLKESDADVQKIMGTLFFLTTGLMLSPFSMITLFLSGRQLFNSERASKIYHSFPYFLSMITVELTIEFFVTLVEVTVCYMLARLRMDAGRFFFAVLVYSFIHSLSTFFISSLANLTGTSDLTFSYASSLSVVFMLFAGFYVPTNELPRAFGWLHWVNPAFYGYSSVVINQFEDLQLKCTDEPCKFTNGNQVIEYYGIEDWTRGGSFGVLVAWATFFYSLSYFALHFLHREKR.

The ABC transporter domain maps to 56-300 (VNLDNKTENS…SLGYPCPNNT (245 aa)). 90–97 (GPSGSGKS) serves as a coordination point for ATP. The ABC transmembrane type-2 domain maps to 373 to 621 (GNALSRVITA…SLSYFALHFL (249 aa)). A run of 7 helical transmembrane segments spans residues 376 to 396 (LSRV…FAGL), 409 to 429 (TLFF…TLFL), 447 to 467 (FPYF…VTLV), 485 to 505 (FFFA…FISS), 515 to 535 (LTFS…GFYV), 543 to 563 (AFGW…VVIN), and 600 to 620 (FGVL…ALHF).

It belongs to the ABC transporter superfamily. ABCG family. Eye pigment precursor importer (TC 3.A.1.204) subfamily.

The protein localises to the membrane. This chain is ABC transporter G family member 8 (abcG8), found in Dictyostelium discoideum (Social amoeba).